We begin with the raw amino-acid sequence, 491 residues long: Aspartyl/glutamyl-tRNA(Asn/Gln) amidotransferase subunit B (491 aa).

It belongs to the GatB/GatE family. GatB subfamily. In terms of assembly, heterotrimer of A, B and C subunits.

The enzyme catalyses L-glutamyl-tRNA(Gln) + L-glutamine + ATP + H2O = L-glutaminyl-tRNA(Gln) + L-glutamate + ADP + phosphate + H(+). It carries out the reaction L-aspartyl-tRNA(Asn) + L-glutamine + ATP + H2O = L-asparaginyl-tRNA(Asn) + L-glutamate + ADP + phosphate + 2 H(+). Allows the formation of correctly charged Asn-tRNA(Asn) or Gln-tRNA(Gln) through the transamidation of misacylated Asp-tRNA(Asn) or Glu-tRNA(Gln) in organisms which lack either or both of asparaginyl-tRNA or glutaminyl-tRNA synthetases. The reaction takes place in the presence of glutamine and ATP through an activated phospho-Asp-tRNA(Asn) or phospho-Glu-tRNA(Gln). In Burkholderia lata (strain ATCC 17760 / DSM 23089 / LMG 22485 / NCIMB 9086 / R18194 / 383), this protein is Aspartyl/glutamyl-tRNA(Asn/Gln) amidotransferase subunit B.